A 1057-amino-acid polypeptide reads, in one-letter code: Protein transport protein Sec16B (1057 aa).

Residues 1 to 15 (MELWVPQTQGRTTGP) show a composition bias toward polar residues. Residues 1–86 (MELWVPQTQG…VSGADYLKGS (86 aa)) are disordered. The segment covering 45 to 63 (QDTHKNSKPQQDPRDDHQQ) has biased composition (basic and acidic residues). A phosphoserine mark is found at Ser-70, Ser-137, Ser-161, and Ser-185. The segment at 185 to 220 (SAFGLEQPGEFFPESGAQKQKPSLTSKSNLLQQHES) is disordered. A compositionally biased stretch (polar residues) spans 201–213 (AQKQKPSLTSKSN). Phosphoserine is present on Ser-245. Positions 263-708 (APMRFYVPHV…KHKELEQTRT (446 aa)) are central conserved domain (CCD); required for localization to endoplasmic reticulum exit sites. Positions 704 to 715 (EQTRTGDLRDPD) are enriched in basic and acidic residues. Disordered stretches follow at residues 704–778 (EQTR…TYSE) and 849–1057 (AVIS…SQPC). Residues 737–764 (GQQNYSEDSEYSSALWPTSEQTSLTNPT) show a composition bias toward polar residues. Residue Thr-856 is modified to Phosphothreonine. Ser-866, Ser-869, Ser-872, and Ser-881 each carry phosphoserine. The span at 883-903 (GADKPPHPDASQKEKLRDGKN) shows a compositional bias: basic and acidic residues. The segment covering 906 to 926 (SSGFGWFSWFRSKPASSVSTS) has biased composition (low complexity). Residues 927–938 (GDEDSVDSSDSE) are compositionally biased toward acidic residues. The segment covering 990-999 (EGVGIGGFSG) has biased composition (gly residues). Positions 1028–1043 (NPSQVPQLPTASSLNR) are enriched in polar residues.

The protein belongs to the SEC16 family. In terms of assembly, SEC16A and SEC16B are each present in multiple copies in a heteromeric complex. Interacts with TFG. Interacts with SEC13. Liver, kidney, heart, spleen and brain.

Its subcellular location is the endoplasmic reticulum membrane. It is found in the golgi apparatus membrane. Its function is as follows. Plays a role in the organization of the endoplasmic reticulum exit sites (ERES), also known as transitional endoplasmic reticulum (tER). Required for secretory cargo traffic from the endoplasmic reticulum to the Golgi apparatus. Involved in peroxisome biogenesis. Regulates the transport of peroxisomal biogenesis factors PEX3 and PEX16 from the ER to peroxisomes. In Rattus norvegicus (Rat), this protein is Protein transport protein Sec16B (Sec16b).